The following is a 293-amino-acid chain: Ribosomal RNA small subunit methyltransferase A (293 aa).

Residues N33, V35, G60, E81, D111, and N130 each coordinate S-adenosyl-L-methionine.

It belongs to the class I-like SAM-binding methyltransferase superfamily. rRNA adenine N(6)-methyltransferase family. RsmA subfamily.

It is found in the cytoplasm. It catalyses the reaction adenosine(1518)/adenosine(1519) in 16S rRNA + 4 S-adenosyl-L-methionine = N(6)-dimethyladenosine(1518)/N(6)-dimethyladenosine(1519) in 16S rRNA + 4 S-adenosyl-L-homocysteine + 4 H(+). Functionally, specifically dimethylates two adjacent adenosines (A1518 and A1519) in the loop of a conserved hairpin near the 3'-end of 16S rRNA in the 30S particle. May play a critical role in biogenesis of 30S subunits. The chain is Ribosomal RNA small subunit methyltransferase A from Corynebacterium glutamicum (strain R).